The sequence spans 436 residues: p-aminobenzoyl-glutamate hydrolase subunit A (436 aa).

Belongs to the peptidase M20 family. As to quaternary structure, forms a heterodimer with AbgB. Mn(2+) is required as a cofactor.

Component of the p-aminobenzoyl-glutamate hydrolase multicomponent enzyme system which catalyzes the cleavage of p-aminobenzoyl-glutamate (PABA-GLU) to form p-aminobenzoate (PABA) and glutamate. AbgAB does not degrade dipeptides and the physiological role of abgABT should be clarified. The polypeptide is p-aminobenzoyl-glutamate hydrolase subunit A (abgA) (Escherichia coli (strain K12)).